The chain runs to 293 residues: MKI67 FHA domain-interacting nucleolar phosphoprotein (293 aa).

An N-acetylalanine modification is found at A2. Residue K38 forms a Glycyl lysine isopeptide (Lys-Gly) (interchain with G-Cter in SUMO2) linkage. The RRM domain occupies 45–123 (GVVYVRHLPN…RLLECHFMPP (79 aa)). At R114 the chain carries Omega-N-methylarginine; by PRMT1 and PRMT8. A Glycyl lysine isopeptide (Lys-Gly) (interchain with G-Cter in SUMO2) cross-link involves residue K139. S145 carries the phosphoserine modification. Glycyl lysine isopeptide (Lys-Gly) (interchain with G-Cter in SUMO2) cross-links involve residues K179 and K192. A compositionally biased stretch (polar residues) spans 197–207 (SKTNRQTSTKG). Positions 197–239 (SKTNRQTSTKGQVLRKKKKKVSGTLDTPEKTVDSQGPTPVCTP) are disordered. S218 carries the phosphoserine modification. At T223 the chain carries Phosphothreonine. Residues 226–269 (KTVDSQGPTPVCTPTFLERRKSQVAELNDDDKDDEIVFKQPISC) are interaction with MKI67. Phosphoserine is present on S230. A phosphothreonine mark is found at T234 and T238. An omega-N-methylated arginine; by PRMT1 and PRMT8 mark is found at R244 and R245. At S247 the chain carries Phosphoserine. Residue K271 forms a Glycyl lysine isopeptide (Lys-Gly) (interchain with G-Cter in SUMO1); alternate linkage. Residue K271 forms a Glycyl lysine isopeptide (Lys-Gly) (interchain with G-Cter in SUMO2); alternate linkage. The interval 271–293 (KEEIQETQTPTHSRKKRRRSSNQ) is disordered. Phosphothreonine is present on T279. Residues 282–293 (HSRKKRRRSSNQ) show a composition bias toward basic residues. Omega-N-methylarginine; by PRMT1 and PRMT8 is present on R284.

In terms of assembly, binds to the FHA domain of MKI67; this interaction is enhanced in mitosis. Post-translationally, sequentially phosphorylated on Thr-238, Thr-234 and Ser-230. Thr-234 is phosphorylated only when Thr-238 is phosphorylated. Likewise, phosphorylation at Ser-230 requires that Thr-234 and Thr-238 are phosphorylated. Phosphorylation enhances MKI67 binding.

The protein localises to the nucleus. It is found in the nucleolus. Its subcellular location is the chromosome. The polypeptide is MKI67 FHA domain-interacting nucleolar phosphoprotein (NIFK) (Homo sapiens (Human)).